We begin with the raw amino-acid sequence, 65 residues long: Large ribosomal subunit protein bL33c (65 aa).

It belongs to the bacterial ribosomal protein bL33 family.

The protein resides in the plastid. The chain is Large ribosomal subunit protein bL33c from Aneura mirabilis (Parasitic liverwort).